A 334-amino-acid polypeptide reads, in one-letter code: Histo-blood group ABO system transferase 2 (334 aa).

The Cytoplasmic portion of the chain corresponds to 1–15 (MKDLRFGRLKCYSLH). The helical; Signal-anchor for type II membrane protein transmembrane segment at 16 to 36 (LGILPLTVLVLVFFCFVCLSL) threads the bilayer. Over 37–334 (RSQEWGHPGA…VPKNHQAIRN (298 aa)) the chain is Lumenal. The N-linked (GlcNAc...) asparagine glycan is linked to asparagine 94. Residues 102–104 (FAV), tyrosine 107, and 192–194 (DVD) contribute to the UDP-N-acetyl-alpha-D-galactosamine site. Mn(2+) contacts are provided by aspartate 192 and aspartate 194. Histidine 214, threonine 226, glutamate 284, and aspartate 307 together coordinate an alpha-L-fucosyl-(1-&gt;2)-beta-D-galactosyl derivative. The Nucleophile role is filled by glutamate 284.

Belongs to the glycosyltransferase 6 family. It depends on Mn(2+) as a cofactor. In terms of tissue distribution, large intestine, caecum, stomach, pancreas, submaxillary gland and kidney (at protein level). Ubiquitous.

It localises to the golgi apparatus. It is found in the golgi stack membrane. Its subcellular location is the secreted. The catalysed reaction is an alpha-L-fucosyl-(1-&gt;2)-beta-D-galactosyl derivative + UDP-N-acetyl-alpha-D-galactosamine = an N-acetyl-alpha-D-galactosaminyl-(1-&gt;3)-[alpha-L-fucosyl-(1-&gt;2)]-beta-D-galactosyl derivative + UDP + H(+). It carries out the reaction an alpha-L-fucosyl-(1-&gt;2)-beta-D-galactosyl derivative + UDP-alpha-D-galactose = an alpha-D-galactosyl-(1-&gt;3)-[alpha-L-fucosyl-(1-&gt;2)]-beta-D-galactosyl derivative + UDP + H(+). The protein operates within protein modification; protein glycosylation. Its function is as follows. Possesses strong B transferase activity and weak A transferase activity. The polypeptide is Histo-blood group ABO system transferase 2 (Abo2) (Rattus norvegicus (Rat)).